The sequence spans 207 residues: Ribosomal RNA small subunit methyltransferase G (207 aa).

S-adenosyl-L-methionine contacts are provided by residues glycine 73, leucine 78, 124 to 125, and arginine 139; that span reads VE.

It belongs to the methyltransferase superfamily. RNA methyltransferase RsmG family.

It is found in the cytoplasm. It carries out the reaction guanosine(527) in 16S rRNA + S-adenosyl-L-methionine = N(7)-methylguanosine(527) in 16S rRNA + S-adenosyl-L-homocysteine. Its function is as follows. Specifically methylates the N7 position of guanine in position 527 of 16S rRNA. The protein is Ribosomal RNA small subunit methyltransferase G of Enterobacter sp. (strain 638).